We begin with the raw amino-acid sequence, 216 residues long: Somatotropin (216 aa).

The first 26 residues, M1–A26, serve as a signal peptide directing secretion. H45 is a binding site for Zn(2+). C78 and C189 form a disulfide bridge. Residue S131 is modified to Phosphoserine. E198 is a Zn(2+) binding site. C206 and C214 are oxidised to a cystine.

The protein belongs to the somatotropin/prolactin family.

Its subcellular location is the secreted. Its function is as follows. Plays an important role in growth control. Its major role in stimulating body growth is to stimulate the liver and other tissues to secrete IGF1. It stimulates both the differentiation and proliferation of myoblasts. It also stimulates amino acid uptake and protein synthesis in muscle and other tissues. The chain is Somatotropin (GH1) from Sus scrofa (Pig).